Reading from the N-terminus, the 815-residue chain is Glycogen phosphorylase (815 aa).

The residue at position 662 (K662) is an N6-(pyridoxal phosphate)lysine.

This sequence belongs to the glycogen phosphorylase family. The cofactor is pyridoxal 5'-phosphate.

It catalyses the reaction [(1-&gt;4)-alpha-D-glucosyl](n) + phosphate = [(1-&gt;4)-alpha-D-glucosyl](n-1) + alpha-D-glucose 1-phosphate. Functionally, phosphorylase is an important allosteric enzyme in carbohydrate metabolism. Enzymes from different sources differ in their regulatory mechanisms and in their natural substrates. However, all known phosphorylases share catalytic and structural properties. The sequence is that of Glycogen phosphorylase (glgP) from Shigella flexneri.